The chain runs to 341 residues: UDP-3-O-acylglucosamine N-acyltransferase (341 aa).

Catalysis depends on His-239, which acts as the Proton acceptor.

The protein belongs to the transferase hexapeptide repeat family. LpxD subfamily. In terms of assembly, homotrimer.

It carries out the reaction a UDP-3-O-[(3R)-3-hydroxyacyl]-alpha-D-glucosamine + a (3R)-hydroxyacyl-[ACP] = a UDP-2-N,3-O-bis[(3R)-3-hydroxyacyl]-alpha-D-glucosamine + holo-[ACP] + H(+). Its pathway is bacterial outer membrane biogenesis; LPS lipid A biosynthesis. In terms of biological role, catalyzes the N-acylation of UDP-3-O-acylglucosamine using 3-hydroxyacyl-ACP as the acyl donor. Is involved in the biosynthesis of lipid A, a phosphorylated glycolipid that anchors the lipopolysaccharide to the outer membrane of the cell. The chain is UDP-3-O-acylglucosamine N-acyltransferase from Shewanella sp. (strain MR-7).